The chain runs to 1084 residues: Teashirt homolog 1 (1084 aa).

3 disordered regions span residues 49–108, 140–167, and 269–298; these read EETE…SVSY, NSATSNNDASQKESSTPTPTPPTSTAST, and GHYRDDNRDKDSEKTKRWSKPRKRSLMEME. 2 stretches are compositionally biased toward polar residues: residues 57 to 71 and 140 to 152; these read QSYQNSPVSTATNQD and NSATSNNDASQKE. 2 C2H2-type zinc fingers span residues 246–270 and 307–331; these read FRCKDCSAAYDTLVELTVHMNETGH and LKCMYCGHSFESLQDLSVHMIKTKH. Over residues 269–284 the composition is skewed to basic and acidic residues; the sequence is GHYRDDNRDKDSEKTK. The segment at 416–440 adopts a C2H2-type 3; atypical zinc-finger fold; sequence LKCMECGSSHDTLQQLTAHMMVTGH. Disordered regions lie at residues 467–534 and 653–728; these read SIPL…EKFE and TGKV…LKAK. 3 stretches are compositionally biased toward basic and acidic residues: residues 496-534, 653-671, and 681-714; these read SEEKKEPEKEKEKEKAPPAAGDAERKIKEETEDATEKFE, TGKVSIKKEERPTEKEKSS, and KENKDLPKTEETGSKPQKKGSDSETGKAKKESTL. Position 771 is a phosphoserine (Ser-771). A disordered region spans residues 855–879; it reads GRLTPKSSTPSTVSEKSDADGSSFE. A compositionally biased stretch (polar residues) spans 859–868; it reads PKSSTPSTVS. Residues 891 to 961 constitute a DNA-binding region (homeobox; atypical); the sequence is RKGRQSNWNP…NVKYQLRRTG (71 aa). C2H2-type zinc fingers lie at residues 976 to 998 and 1044 to 1067; these read FFCNDCASQFRTASTYVSHLETH and FQCKLCNRTFASKHAVKLHLSKTH.

Belongs to the teashirt C2H2-type zinc-finger protein family. In terms of assembly, interacts (via homeobox domain) with APBB1 (via PID domain 1).

The protein resides in the nucleus. Probable transcriptional regulator involved in developmental processes. May act as a transcriptional repressor (Potential). The polypeptide is Teashirt homolog 1 (Tshz1) (Mus musculus (Mouse)).